The sequence spans 491 residues: Probable cytosol aminopeptidase (491 aa).

Residues Lys260 and Asp265 each contribute to the Mn(2+) site. Lys272 is an active-site residue. Mn(2+)-binding residues include Asp284, Asp343, and Glu345. Arg347 is an active-site residue.

The protein belongs to the peptidase M17 family. Requires Mn(2+) as cofactor.

The protein resides in the cytoplasm. It carries out the reaction Release of an N-terminal amino acid, Xaa-|-Yaa-, in which Xaa is preferably Leu, but may be other amino acids including Pro although not Arg or Lys, and Yaa may be Pro. Amino acid amides and methyl esters are also readily hydrolyzed, but rates on arylamides are exceedingly low.. The enzyme catalyses Release of an N-terminal amino acid, preferentially leucine, but not glutamic or aspartic acids.. Its function is as follows. Presumably involved in the processing and regular turnover of intracellular proteins. Catalyzes the removal of unsubstituted N-terminal amino acids from various peptides. This is Probable cytosol aminopeptidase from Rippkaea orientalis (strain PCC 8801 / RF-1) (Cyanothece sp. (strain PCC 8801)).